A 96-amino-acid polypeptide reads, in one-letter code: MAKGQSLQDPYLNALRRERIPVSIYLVNGIKLQGQIESFDQFVILLKNTVNQMVYKHAISTVVPARSVSHHNNSNNSNQQNYQQEQQTDSNVEKAE.

The 60-residue stretch at Asp-9–Val-68 folds into the Sm domain. A disordered region spans residues Ser-67–Glu-96. Positions Asn-72–Gln-87 are enriched in low complexity.

Belongs to the Hfq family. Homohexamer.

Its function is as follows. RNA chaperone that binds small regulatory RNA (sRNAs) and mRNAs to facilitate mRNA translational regulation in response to envelope stress, environmental stress and changes in metabolite concentrations. Also binds with high specificity to tRNAs. This chain is RNA-binding protein Hfq, found in Pasteurella multocida (strain Pm70).